The chain runs to 263 residues: Small ribosomal subunit protein eS4, Y isoform 1 (263 aa).

One can recognise an S4 RNA-binding domain in the interval 42-104 (LPLIIFLRNR…TGEHFRLVYD (63 aa)).

The protein belongs to the eukaryotic ribosomal protein eS4 family.

In Monodelphis domestica (Gray short-tailed opossum), this protein is Small ribosomal subunit protein eS4, Y isoform 1 (RPS4Y1).